The chain runs to 225 residues: Phosphatidylserine decarboxylase proenzyme (225 aa).

S182 (schiff-base intermediate with substrate; via pyruvic acid) is an active-site residue. S182 carries the pyruvic acid (Ser); by autocatalysis modification.

This sequence belongs to the phosphatidylserine decarboxylase family. PSD-A subfamily. Heterodimer of a large membrane-associated beta subunit and a small pyruvoyl-containing alpha subunit. Requires pyruvate as cofactor. Post-translationally, is synthesized initially as an inactive proenzyme. Formation of the active enzyme involves a self-maturation process in which the active site pyruvoyl group is generated from an internal serine residue via an autocatalytic post-translational modification. Two non-identical subunits are generated from the proenzyme in this reaction, and the pyruvate is formed at the N-terminus of the alpha chain, which is derived from the carboxyl end of the proenzyme. The post-translation cleavage follows an unusual pathway, termed non-hydrolytic serinolysis, in which the side chain hydroxyl group of the serine supplies its oxygen atom to form the C-terminus of the beta chain, while the remainder of the serine residue undergoes an oxidative deamination to produce ammonia and the pyruvoyl prosthetic group on the alpha chain.

The protein localises to the cell membrane. The enzyme catalyses a 1,2-diacyl-sn-glycero-3-phospho-L-serine + H(+) = a 1,2-diacyl-sn-glycero-3-phosphoethanolamine + CO2. Its pathway is phospholipid metabolism; phosphatidylethanolamine biosynthesis; phosphatidylethanolamine from CDP-diacylglycerol: step 2/2. In terms of biological role, catalyzes the formation of phosphatidylethanolamine (PtdEtn) from phosphatidylserine (PtdSer). This is Phosphatidylserine decarboxylase proenzyme from Neorickettsia sennetsu (strain ATCC VR-367 / Miyayama) (Ehrlichia sennetsu).